The sequence spans 381 residues: Methanesulfonate monooxygenase (381 aa).

The protein belongs to the SsuD family.

The catalysed reaction is an alkanesulfonate + FMNH2 + O2 = an aldehyde + FMN + sulfite + H2O + 2 H(+). In terms of biological role, catalyzes the desulfonation of aliphatic sulfonates. Shows highest activity with methanesulfonate. The protein is Methanesulfonate monooxygenase (msuD) of Pseudomonas aeruginosa (strain ATCC 15692 / DSM 22644 / CIP 104116 / JCM 14847 / LMG 12228 / 1C / PRS 101 / PAO1).